A 72-amino-acid chain; its full sequence is Holocyclotoxin-1 (72 aa).

An N-terminal signal peptide occupies residues 1–22 (MSKVTTVFIGALVLLLLIENGF). 4 disulfide bridges follow: cysteine 24–cysteine 40, cysteine 32–cysteine 57, cysteine 36–cysteine 60, and cysteine 42–cysteine 70.

Expressed in salivary glands.

Its subcellular location is the secreted. Functionally, probable neurotoxin. This Ixodes holocyclus (Australian paralysis tick) protein is Holocyclotoxin-1.